A 92-amino-acid polypeptide reads, in one-letter code: Ictacalcin (92 aa).

2 EF-hand domains span residues 12–47 (ISTF…AFGN) and 49–84 (SDQA…TTML). Residues Thr27, Glu32, Asp62, Asn64, Asp66, and Glu73 each coordinate Ca(2+).

Belongs to the S-100 family. As to expression, abundant in epithelial cells of olfactory rosette, barbel, skin and gill but not brain or muscle.

Its function is as follows. Plays an important role in catfish calcium homeostasis. The sequence is that of Ictacalcin from Ictalurus punctatus (Channel catfish).